Reading from the N-terminus, the 278-residue chain is Phosphatidylglycerol--prolipoprotein diacylglyceryl transferase (278 aa).

The next 4 membrane-spanning stretches (helical) occupy residues 17–37 (LAVR…ILLG), 57–77 (ALFY…VLFY), 89–109 (ILAI…VAIA), and 119–139 (LSWL…LGAG). Arginine 140 is a binding site for a 1,2-diacyl-sn-glycero-3-phospho-(1'-sn-glycerol). 3 helical membrane passes run 174–194 (QLYE…LYSA), 200–220 (GAVT…CEFF), and 233–253 (LGIS…IALL).

It belongs to the Lgt family.

The protein resides in the cell inner membrane. The catalysed reaction is L-cysteinyl-[prolipoprotein] + a 1,2-diacyl-sn-glycero-3-phospho-(1'-sn-glycerol) = an S-1,2-diacyl-sn-glyceryl-L-cysteinyl-[prolipoprotein] + sn-glycerol 1-phosphate + H(+). The protein operates within protein modification; lipoprotein biosynthesis (diacylglyceryl transfer). Catalyzes the transfer of the diacylglyceryl group from phosphatidylglycerol to the sulfhydryl group of the N-terminal cysteine of a prolipoprotein, the first step in the formation of mature lipoproteins. The chain is Phosphatidylglycerol--prolipoprotein diacylglyceryl transferase from Nitrosomonas europaea (strain ATCC 19718 / CIP 103999 / KCTC 2705 / NBRC 14298).